The sequence spans 298 residues: ATP synthase gamma chain (298 aa).

This sequence belongs to the ATPase gamma chain family. As to quaternary structure, F-type ATPases have 2 components, CF(1) - the catalytic core - and CF(0) - the membrane proton channel. CF(1) has five subunits: alpha(3), beta(3), gamma(1), delta(1), epsilon(1). CF(0) has three main subunits: a, b and c.

The protein localises to the cell inner membrane. Functionally, produces ATP from ADP in the presence of a proton gradient across the membrane. The gamma chain is believed to be important in regulating ATPase activity and the flow of protons through the CF(0) complex. This chain is ATP synthase gamma chain, found in Desulforapulum autotrophicum (strain ATCC 43914 / DSM 3382 / VKM B-1955 / HRM2) (Desulfobacterium autotrophicum).